The chain runs to 293 residues: uncharacterized protein (293 aa).

Disordered regions lie at residues methionine 1–leucine 114 and glutamate 268–leucine 293. Phosphoserine is present on residues serine 34, serine 35, and serine 89. Basic and acidic residues-rich tracts occupy residues serine 73–threonine 95 and glycine 277–leucine 293.

This is an uncharacterized protein from Mus musculus (Mouse).